We begin with the raw amino-acid sequence, 331 residues long: L-lactate dehydrogenase A chain (331 aa).

NAD(+)-binding positions include 29–57 (GMVG…MEDK) and Arg-98. Substrate-binding residues include Arg-105, Asn-137, and Arg-168. NAD(+) is bound at residue Asn-137. The Proton acceptor role is filled by His-192. Thr-247 contributes to the substrate binding site.

The protein belongs to the LDH/MDH superfamily. LDH family. In terms of assembly, homotetramer.

It is found in the cytoplasm. The enzyme catalyses (S)-lactate + NAD(+) = pyruvate + NADH + H(+). It functions in the pathway fermentation; pyruvate fermentation to lactate; (S)-lactate from pyruvate: step 1/1. Interconverts simultaneously and stereospecifically pyruvate and lactate with concomitant interconversion of NADH and NAD(+). This Harpagifer antarcticus (Antarctic spiny plunderfish) protein is L-lactate dehydrogenase A chain (ldha).